A 365-amino-acid polypeptide reads, in one-letter code: MTEKSAELVRLNELKAFVSTKAGVKGLVDTKITEVPRIFHIPSSSTLSNNKPSDIFGLNLTVPIIDLGDGNTSAARNVLVSKIKEAAENWGFFQVINHGIPLTVLKDIKQGVRRFHEEDPEVKKQYFATDFNTRFAYNTNFDIHYSSPMNWKDSFTCYTCPQDPLKPEEIPLACRDVVIEYSKHVMELGGLLFQLLSEALGLDSEILKNMDCLKGLLMLCHYYPPCPQPDLTLGISKHTDNSFITILLQDQIGGLQVLHQDSWVDVTPVPGALVISIGDFMQLITNDKFLSMEHRVRANRDGPRISVACFVSSGVFPNSTVYGPIKELLSDENPAKYRDITIPEYTVGYLASIFDGKSHLSKFRI.

Residues 214-313 (KGLLMLCHYY…RISVACFVSS (100 aa)) enclose the Fe2OG dioxygenase domain. Residues His-238, Asp-240, and His-294 each contribute to the Fe cation site. Arg-304 contributes to the 2-oxoglutarate binding site.

This sequence belongs to the iron/ascorbate-dependent oxidoreductase family. Fe(2+) serves as cofactor.

In Arabidopsis thaliana (Mouse-ear cress), this protein is 1-aminocyclopropane-1-carboxylate oxidase homolog 9.